An 84-amino-acid polypeptide reads, in one-letter code: ATP synthase subunit c (84 aa).

2 helical membrane passes run 10–30 (IAVG…FALL) and 53–73 (FIIA…ALLF).

Belongs to the ATPase C chain family. F-type ATPases have 2 components, F(1) - the catalytic core - and F(0) - the membrane proton channel. F(1) has five subunits: alpha(3), beta(3), gamma(1), delta(1), epsilon(1). F(0) has three main subunits: a(1), b(2) and c(10-14). The alpha and beta chains form an alternating ring which encloses part of the gamma chain. F(1) is attached to F(0) by a central stalk formed by the gamma and epsilon chains, while a peripheral stalk is formed by the delta and b chains.

It is found in the cell inner membrane. Its function is as follows. F(1)F(0) ATP synthase produces ATP from ADP in the presence of a proton or sodium gradient. F-type ATPases consist of two structural domains, F(1) containing the extramembraneous catalytic core and F(0) containing the membrane proton channel, linked together by a central stalk and a peripheral stalk. During catalysis, ATP synthesis in the catalytic domain of F(1) is coupled via a rotary mechanism of the central stalk subunits to proton translocation. In terms of biological role, key component of the F(0) channel; it plays a direct role in translocation across the membrane. A homomeric c-ring of between 10-14 subunits forms the central stalk rotor element with the F(1) delta and epsilon subunits. This chain is ATP synthase subunit c, found in Vibrio alginolyticus.